Here is a 500-residue protein sequence, read N- to C-terminus: Squalene epoxidase ERG1 (500 aa).

The helical transmembrane segment at Glu-20 to Ala-40 threads the bilayer. FAD is bound by residues Val-30–Phe-31, Glu-50–Arg-51, Arg-58, Arg-145, Asp-332, and Met-345. 2 helical membrane-spanning segments follow: residues Ala-450 to Phe-470 and Leu-474 to Met-494.

It belongs to the squalene monooxygenase family. FAD is required as a cofactor.

Its subcellular location is the microsome membrane. The protein localises to the endoplasmic reticulum membrane. It is found in the lipid droplet. It carries out the reaction squalene + reduced [NADPH--hemoprotein reductase] + O2 = (S)-2,3-epoxysqualene + oxidized [NADPH--hemoprotein reductase] + H2O + H(+). It functions in the pathway terpene metabolism; lanosterol biosynthesis; lanosterol from farnesyl diphosphate: step 2/3. It participates in steroid metabolism; ergosterol biosynthesis. Squalene epoxidase; part of the third module of ergosterol biosynthesis pathway that includes the late steps of the pathway. ERG1 catalyzes the epoxidation of squalene into 2,3-epoxysqualene. The third module or late pathway involves the ergosterol synthesis itself through consecutive reactions that mainly occur in the endoplasmic reticulum (ER) membrane. Firstly, the squalene synthase ERG9 catalyzes the condensation of 2 farnesyl pyrophosphate moieties to form squalene, which is the precursor of all steroids. Squalene synthase is crucial for balancing the incorporation of farnesyl diphosphate (FPP) into sterol and nonsterol isoprene synthesis. Secondly, squalene is converted into lanosterol by the consecutive action of the squalene epoxidase ERG1 and the lanosterol synthase ERG7. Then, the delta(24)-sterol C-methyltransferase ERG6 methylates lanosterol at C-24 to produce eburicol. Eburicol is the substrate of the sterol 14-alpha demethylase encoded by CYP51A, CYP51B and CYP51C, to yield 4,4,24-trimethyl ergosta-8,14,24(28)-trienol. CYP51B encodes the enzyme primarily responsible for sterol 14-alpha-demethylation, and plays an essential role in ascospore formation. CYP51A encodes an additional sterol 14-alpha-demethylase, induced on ergosterol depletion and responsible for the intrinsic variation in azole sensitivity. The third CYP51 isoform, CYP51C, does not encode a sterol 14-alpha-demethylase, but is required for full virulence on host wheat ears. The C-14 reductase ERG24 then reduces the C14=C15 double bond which leads to 4,4-dimethylfecosterol. A sequence of further demethylations at C-4, involving the C-4 demethylation complex containing the C-4 methylsterol oxidases ERG25, the sterol-4-alpha-carboxylate 3-dehydrogenase ERG26 and the 3-keto-steroid reductase ERG27, leads to the production of fecosterol via 4-methylfecosterol. ERG28 has a role as a scaffold to help anchor ERG25, ERG26 and ERG27 to the endoplasmic reticulum. The C-8 sterol isomerase ERG2 then catalyzes the reaction which results in unsaturation at C-7 in the B ring of sterols and thus converts fecosterol to episterol. The sterol-C5-desaturases ERG3A and ERG3BB then catalyze the introduction of a C-5 double bond in the B ring to produce 5-dehydroepisterol. The C-22 sterol desaturases ERG5A and ERG5B further convert 5-dehydroepisterol into ergosta-5,7,22,24(28)-tetraen-3beta-ol by forming the C-22(23) double bond in the sterol side chain. Finally, ergosta-5,7,22,24(28)-tetraen-3beta-ol is substrate of the C-24(28) sterol reductase ERG4 to produce ergosterol. The chain is Squalene epoxidase ERG1 from Gibberella zeae (strain ATCC MYA-4620 / CBS 123657 / FGSC 9075 / NRRL 31084 / PH-1) (Wheat head blight fungus).